Here is an 890-residue protein sequence, read N- to C-terminus: Wolframin (890 aa).

Met-1 bears the N-acetylmethionine mark. Residues 1-20 (MNSGTPPPSPSGPPPPPAPQ) show a composition bias toward pro residues. The interval 1-83 (MNSGTPPPSP…ETDRAGPMKA (83 aa)) is disordered. An interaction with ATP6V1A region spans residues 1 to 323 (MNSGTPPPSP…MHWLSTIVPT (323 aa)). Residue Thr-30 is modified to Phosphothreonine. A Phosphoserine modification is found at Ser-32. The segment covering 50–67 (PSAGRSAGEAAAPEPRAP) has biased composition (low complexity). Residues 71–83 (SREETDRAGPMKA) are compositionally biased toward basic and acidic residues. Ser-158 is modified (phosphoserine). The disordered stretch occupies residues 208–227 (VNEQDGGAQPGPVPKSLQKQ). 10 consecutive transmembrane segments (helical) span residues 314-334 (MHWL…FFFI), 340-360 (IDFF…VSMV), 402-422 (NHLE…FSFP), 427-447 (DCIP…TSYM), 465-485 (VAAG…FLKV), 496-516 (GHFI…LFYL), 529-549 (TYCY…SVVI), 563-583 (IGYF…ALMG), 589-609 (RWFL…CGVP), and 632-652 (SSMV…CWFY). Over 653–869 (VYRSEGMKVY…HVKIEQDWRS (217 aa)) the chain is Lumenal. N-linked (GlcNAc...) asparagine glycosylation is found at Asn-663 and Asn-748. Residues 870-890 (TVHGALKFAFDFFFFPFLSAA) form a helical membrane-spanning segment.

In terms of assembly, interacts with ATP6V1A. In terms of tissue distribution, highly expressed in the developing lens.

The protein localises to the endoplasmic reticulum membrane. Its subcellular location is the cytoplasmic vesicle. The protein resides in the secretory vesicle. In terms of biological role, participates in the regulation of cellular Ca(2+) homeostasis, at least partly, by modulating the filling state of the endoplasmic reticulum Ca(2+) store. Negatively regulates the ER stress response and positively regulates the stability of V-ATPase subunits ATP6V1A and ATP1B1 by preventing their degradation through an unknown proteasome-independent mechanism. This Mus musculus (Mouse) protein is Wolframin (Wfs1).